The primary structure comprises 304 residues: Trypsin-3 (304 aa).

Residues 81–301 (IVGGYTCEEN…YVDWIKDTIA (221 aa)) form the Peptidase S1 domain. Disulfide bonds link Cys87–Cys217, Cys105–Cys121, Cys196–Cys263, Cys228–Cys242, and Cys253–Cys277. The active-site Charge relay system is the His120. Glu132, Asn134, Val137, Glu139, and Glu142 together coordinate Ca(2+). Asp164 acts as the Charge relay system in catalysis. Tyr211 bears the Sulfotyrosine mark. The active-site Charge relay system is Ser257.

Belongs to the peptidase S1 family. The cofactor is Ca(2+). In terms of tissue distribution, detected in pancreas and pancreatic fluid (at protein level). Expressed in pancreas and brain. Detected in ileum.

The protein localises to the secreted. It carries out the reaction Preferential cleavage: Arg-|-Xaa, Lys-|-Xaa.. Not inhibited by Kunitz-type trypsin inhibitors. Functionally, digestive protease that cleaves proteins preferentially after an Arg residue and has proteolytic activity toward Kunitz-type trypsin inhibitors. The chain is Trypsin-3 (PRSS3) from Homo sapiens (Human).